The chain runs to 334 residues: Aspartate carbamoyltransferase catalytic subunit (334 aa).

Arg71 and Thr72 together coordinate carbamoyl phosphate. An L-aspartate-binding site is contributed by Lys99. The carbamoyl phosphate site is built by Arg121, His151, and Gln154. L-aspartate contacts are provided by Arg184 and Arg239. Gly280 and Pro281 together coordinate carbamoyl phosphate.

Belongs to the aspartate/ornithine carbamoyltransferase superfamily. ATCase family. In terms of assembly, heterododecamer (2C3:3R2) of six catalytic PyrB chains organized as two trimers (C3), and six regulatory PyrI chains organized as three dimers (R2).

The enzyme catalyses carbamoyl phosphate + L-aspartate = N-carbamoyl-L-aspartate + phosphate + H(+). It participates in pyrimidine metabolism; UMP biosynthesis via de novo pathway; (S)-dihydroorotate from bicarbonate: step 2/3. Catalyzes the condensation of carbamoyl phosphate and aspartate to form carbamoyl aspartate and inorganic phosphate, the committed step in the de novo pyrimidine nucleotide biosynthesis pathway. This Pseudomonas savastanoi pv. phaseolicola (strain 1448A / Race 6) (Pseudomonas syringae pv. phaseolicola (strain 1448A / Race 6)) protein is Aspartate carbamoyltransferase catalytic subunit.